Here is a 291-residue protein sequence, read N- to C-terminus: RPE-retinal G protein-coupled receptor (291 aa).

Over 1 to 15 (MAETSALPTGFGELE) the chain is Extracellular. A helical transmembrane segment spans residues 16–36 (VLAVGMVLLVEALSGLSLNTL). The Cytoplasmic segment spans residues 37-52 (TIFSFCKTPELRTPCH). Residues 53-73 (LLVLSLALADSGISLNALVAA) traverse the membrane as a helical segment. Topologically, residues 74–91 (TSSLLRRWPYGSDGCQAH) are extracellular. The cysteines at positions 88 and 162 are disulfide-linked. Residues 92–112 (GFQGFVTALASICSSAAIAWG) form a helical membrane-spanning segment. Residues 113–130 (RYHHYCTRSQLAWNSAVS) lie on the Cytoplasmic side of the membrane. The chain crosses the membrane as a helical span at residues 131–151 (LVLFVWLSSAFWAALPLLGWG). Residues 152–175 (HYDYEPLGTCCTLDYSKGDRNFTS) are Extracellular-facing. An N-linked (GlcNAc...) asparagine glycan is attached at N172. A helical transmembrane segment spans residues 176–196 (FLFTMSFFNFAMPLFITITSY). Residues 197–219 (SLMEQKLGKSGHLQVNTTLPART) lie on the Cytoplasmic side of the membrane. Residues 220–240 (LLLGWGPYAILYLYAVIADVT) form a helical membrane-spanning segment. At 241–247 (SISPKLQ) the chain is on the extracellular side. The helical transmembrane segment at 248–268 (MVPALIAKMVPTINAINYALG) threads the bilayer. N6-(retinylidene)lysine is present on K255. Residues 269–291 (NEMVCRGIWQCLSPQKREKDRTK) lie on the Cytoplasmic side of the membrane.

It belongs to the G-protein coupled receptor 1 family. Opsin subfamily. Covalently binds all-trans- and 11-cis-retinal. Preferentially expressed at high levels in the retinal pigment epithelium (RPE) and Mueller cells of the neural retina.

The protein localises to the membrane. Its function is as follows. Receptor for all-trans- and 11-cis-retinal. Binds preferentially to the former and may catalyze the isomerization of the chromophore by a retinochrome-like mechanism. This Homo sapiens (Human) protein is RPE-retinal G protein-coupled receptor (RGR).